Here is a 273-residue protein sequence, read N- to C-terminus: Putative phosphoenolpyruvate synthase regulatory protein (273 aa).

Residue 153-160 (GVSRCGKT) participates in ADP binding.

Belongs to the pyruvate, phosphate/water dikinase regulatory protein family. PSRP subfamily.

The catalysed reaction is [pyruvate, water dikinase] + ADP = [pyruvate, water dikinase]-phosphate + AMP + H(+). It carries out the reaction [pyruvate, water dikinase]-phosphate + phosphate + H(+) = [pyruvate, water dikinase] + diphosphate. Bifunctional serine/threonine kinase and phosphorylase involved in the regulation of the phosphoenolpyruvate synthase (PEPS) by catalyzing its phosphorylation/dephosphorylation. The protein is Putative phosphoenolpyruvate synthase regulatory protein of Pectobacterium atrosepticum (strain SCRI 1043 / ATCC BAA-672) (Erwinia carotovora subsp. atroseptica).